The primary structure comprises 110 residues: uncharacterized protein (110 aa).

Functionally, may play a regulatory role in sulfomenaquinone (SMK) biosynthesis. This is an uncharacterized protein from Mycobacterium bovis (strain ATCC BAA-935 / AF2122/97).